The chain runs to 273 residues: Large ribosomal subunit protein uL2c (273 aa).

The span at 1-31 (MAIHLSKTSSPSTRNGAVNSQVKSNSRNRLI) shows a compositional bias: polar residues. 2 disordered regions span residues 1 to 53 (MAIH…GHRG) and 222 to 273 (MNPV…RRSK).

Belongs to the universal ribosomal protein uL2 family. As to quaternary structure, part of the 50S ribosomal subunit.

The protein localises to the plastid. It localises to the chloroplast. The sequence is that of Large ribosomal subunit protein uL2c (rpl2) from Pisum sativum (Garden pea).